The primary structure comprises 571 residues: Proline--tRNA ligase (571 aa).

Belongs to the class-II aminoacyl-tRNA synthetase family. ProS type 1 subfamily. As to quaternary structure, homodimer.

The protein localises to the cytoplasm. The enzyme catalyses tRNA(Pro) + L-proline + ATP = L-prolyl-tRNA(Pro) + AMP + diphosphate. Its function is as follows. Catalyzes the attachment of proline to tRNA(Pro) in a two-step reaction: proline is first activated by ATP to form Pro-AMP and then transferred to the acceptor end of tRNA(Pro). As ProRS can inadvertently accommodate and process non-cognate amino acids such as alanine and cysteine, to avoid such errors it has two additional distinct editing activities against alanine. One activity is designated as 'pretransfer' editing and involves the tRNA(Pro)-independent hydrolysis of activated Ala-AMP. The other activity is designated 'posttransfer' editing and involves deacylation of mischarged Ala-tRNA(Pro). The misacylated Cys-tRNA(Pro) is not edited by ProRS. The protein is Proline--tRNA ligase of Vibrio vulnificus (strain CMCP6).